The sequence spans 372 residues: 4-hydroxy-3-methylbut-2-en-1-yl diphosphate synthase (flavodoxin) (372 aa).

Positions 270, 273, 305, and 312 each coordinate [4Fe-4S] cluster.

This sequence belongs to the IspG family. It depends on [4Fe-4S] cluster as a cofactor.

It catalyses the reaction (2E)-4-hydroxy-3-methylbut-2-enyl diphosphate + oxidized [flavodoxin] + H2O + 2 H(+) = 2-C-methyl-D-erythritol 2,4-cyclic diphosphate + reduced [flavodoxin]. It functions in the pathway isoprenoid biosynthesis; isopentenyl diphosphate biosynthesis via DXP pathway; isopentenyl diphosphate from 1-deoxy-D-xylulose 5-phosphate: step 5/6. Functionally, converts 2C-methyl-D-erythritol 2,4-cyclodiphosphate (ME-2,4cPP) into 1-hydroxy-2-methyl-2-(E)-butenyl 4-diphosphate. The polypeptide is 4-hydroxy-3-methylbut-2-en-1-yl diphosphate synthase (flavodoxin) (Vibrio parahaemolyticus serotype O3:K6 (strain RIMD 2210633)).